Here is a 519-residue protein sequence, read N- to C-terminus: Chaperone SurA (519 aa).

The signal sequence occupies residues 1-31; the sequence is MMRSLHSLRRMSGTVLALMLAAGLPLSAAQA. 2 stretches are compositionally biased toward low complexity: residues 31–45 and 197–207; these read AQPA…QKPA and PAAAQATRAPA. Disordered regions lie at residues 31–50 and 196–221; these read AQPA…PAPS and NPAA…PAQS. The PpiC 1 domain occupies 223–324; it reads PAMLVLAQIL…NGFHILKVVD (102 aa). Positions 328–361 are disordered; the sequence is GGQPAQAARPAPAPAPQQPSSFQEGPSVAAPQGP. Positions 364 to 463 constitute a PpiC 2 domain; the sequence is VTQTHARHIL…FGWHLIQVLE (100 aa).

Its subcellular location is the periplasm. It carries out the reaction [protein]-peptidylproline (omega=180) = [protein]-peptidylproline (omega=0). In terms of biological role, chaperone involved in the correct folding and assembly of outer membrane proteins. Recognizes specific patterns of aromatic residues and the orientation of their side chains, which are found more frequently in integral outer membrane proteins. May act in both early periplasmic and late outer membrane-associated steps of protein maturation. This Bordetella parapertussis (strain 12822 / ATCC BAA-587 / NCTC 13253) protein is Chaperone SurA.